Consider the following 344-residue polypeptide: Oxygen sensor histidine kinase NreB (344 aa).

[4Fe-4S] cluster-binding residues include cysteine 58, cysteine 61, cysteine 73, and cysteine 76. Residues 152-344 form the Histidine kinase domain; it reads RISRELHDSV…GTNVTLNIPI (193 aa). A Phosphohistidine; by autocatalysis modification is found at histidine 158.

It depends on [4Fe-4S] cluster as a cofactor. Post-translationally, autophosphorylated.

It localises to the cytoplasm. It carries out the reaction ATP + protein L-histidine = ADP + protein N-phospho-L-histidine.. Functionally, member of the two-component regulatory system NreB/NreC involved in the control of dissimilatory nitrate/nitrite reduction in response to oxygen. NreB functions as a direct oxygen sensor histidine kinase which is autophosphorylated, in the absence of oxygen, probably at the conserved histidine residue, and transfers its phosphate group probably to a conserved aspartate residue of NreC. NreB/NreC activates the expression of the nitrate (narGHJI) and nitrite (nir) reductase operons, as well as the putative nitrate transporter gene narT. This is Oxygen sensor histidine kinase NreB (nreB) from Staphylococcus aureus (strain JH1).